Reading from the N-terminus, the 114-residue chain is Histone H2B (114 aa).

Residues 1–22 (MAKTPSKKAAKAPKKAGSKRNK) form a disordered region. Lys-3 carries the N6-acetyllysine modification. A Glycyl lysine isopeptide (Lys-Gly) (interchain with G-Cter in ubiquitin) cross-link involves residue Lys-110.

The protein belongs to the histone H2B family. In terms of assembly, the nucleosome is a histone octamer containing two molecules each of H2A, H2B, H3 and H4 assembled in one H3-H4 heterotetramer and two H2A-H2B heterodimers. The octamer wraps approximately 147 bp of DNA. Monoubiquitination of Lys-110 gives a specific tag for epigenetic transcriptional activation and is also prerequisite for histone H3 'Lys-4' and 'Lys-79' methylation.

The protein resides in the nucleus. It is found in the chromosome. In terms of biological role, core component of nucleosome. Nucleosomes wrap and compact DNA into chromatin, limiting DNA accessibility to the cellular machineries which require DNA as a template. Histones thereby play a central role in transcription regulation, DNA repair, DNA replication and chromosomal stability. DNA accessibility is regulated via a complex set of post-translational modifications of histones, also called histone code, and nucleosome remodeling. This Olisthodiscus luteus (Marine phytoflagellate) protein is Histone H2B.